The following is a 243-amino-acid chain: Protein GrpE (243 aa).

Belongs to the GrpE family. As to quaternary structure, homodimer.

The protein localises to the cytoplasm. Its function is as follows. Participates actively in the response to hyperosmotic and heat shock by preventing the aggregation of stress-denatured proteins, in association with DnaK and GrpE. It is the nucleotide exchange factor for DnaK and may function as a thermosensor. Unfolded proteins bind initially to DnaJ; upon interaction with the DnaJ-bound protein, DnaK hydrolyzes its bound ATP, resulting in the formation of a stable complex. GrpE releases ADP from DnaK; ATP binding to DnaK triggers the release of the substrate protein, thus completing the reaction cycle. Several rounds of ATP-dependent interactions between DnaJ, DnaK and GrpE are required for fully efficient folding. This Mycoplasma mobile (strain ATCC 43663 / 163K / NCTC 11711) (Mesomycoplasma mobile) protein is Protein GrpE.